We begin with the raw amino-acid sequence, 435 residues long: Serine carboxypeptidase-like 16 (435 aa).

An N-terminal signal peptide occupies residues 1–23; that stretch reads MGSWIPKLLLLQLVLLLTKHADS. 3 disulfides stabilise this stretch: Cys-82-Cys-325, Cys-246-Cys-260, and Cys-284-Cys-291. The N-linked (GlcNAc...) asparagine glycan is linked to Asn-103. Ser-178 is a catalytic residue. N-linked (GlcNAc...) asparagine glycosylation occurs at Asn-305. Asp-360 is an active-site residue. N-linked (GlcNAc...) asparagine glycosylation is present at Asn-376. The active site involves His-413.

This sequence belongs to the peptidase S10 family. As to expression, expressed in seedlings, roots and leaves.

Its subcellular location is the secreted. Its function is as follows. Probable carboxypeptidase. This Arabidopsis thaliana (Mouse-ear cress) protein is Serine carboxypeptidase-like 16 (SCPL16).